The primary structure comprises 511 residues: Histidine ammonia-lyase (511 aa).

The 5-imidazolinone (Ala-Gly) cross-link spans 142 to 144 (ASG). The residue at position 143 (S143) is a 2,3-didehydroalanine (Ser).

The protein belongs to the PAL/histidase family. In terms of processing, contains an active site 4-methylidene-imidazol-5-one (MIO), which is formed autocatalytically by cyclization and dehydration of residues Ala-Ser-Gly.

The protein resides in the cytoplasm. It catalyses the reaction L-histidine = trans-urocanate + NH4(+). The protein operates within amino-acid degradation; L-histidine degradation into L-glutamate; N-formimidoyl-L-glutamate from L-histidine: step 1/3. The sequence is that of Histidine ammonia-lyase from Phenylobacterium zucineum (strain HLK1).